The sequence spans 556 residues: Putative cysteine ligase BshC (556 aa).

Coiled-coil stretches lie at residues Ile-408–Ala-442 and Leu-468–Thr-513.

Belongs to the BshC family.

Functionally, involved in bacillithiol (BSH) biosynthesis. May catalyze the last step of the pathway, the addition of cysteine to glucosamine malate (GlcN-Mal) to generate BSH. The chain is Putative cysteine ligase BshC from Symbiobacterium thermophilum (strain DSM 24528 / JCM 14929 / IAM 14863 / T).